The primary structure comprises 128 residues: S-protein homolog 5 (128 aa).

The first 20 residues, 1 to 20, serve as a signal peptide directing secretion; it reads MEKVSIVCFFFFLLFGSGYG.

The protein belongs to the plant self-incompatibility (S1) protein family.

Its subcellular location is the secreted. The chain is S-protein homolog 5 from Arabidopsis thaliana (Mouse-ear cress).